The sequence spans 119 residues: Beta-2-microglobulin (119 aa).

Residues 1–20 (MARSVVVALLVLLSLSGLEA) form the signal peptide. In terms of domain architecture, Ig-like C1-type spans 25 to 114 (PKIQVYSRHP…VTFSTPKTVK (90 aa)). Cysteine 45 and cysteine 100 are disulfide-bonded.

It belongs to the beta-2-microglobulin family. Heterodimer of an alpha chain and a beta chain. Beta-2-microglobulin is the beta-chain of major histocompatibility complex class I molecules.

Its subcellular location is the secreted. Its function is as follows. Component of the class I major histocompatibility complex (MHC). Involved in the presentation of peptide antigens to the immune system. This chain is Beta-2-microglobulin (B2M), found in Ateles paniscus (Black spider monkey).